Here is a 617-residue protein sequence, read N- to C-terminus: DNA mismatch repair protein MutL (617 aa).

It belongs to the DNA mismatch repair MutL/HexB family.

Its function is as follows. This protein is involved in the repair of mismatches in DNA. It is required for dam-dependent methyl-directed DNA mismatch repair. May act as a 'molecular matchmaker', a protein that promotes the formation of a stable complex between two or more DNA-binding proteins in an ATP-dependent manner without itself being part of a final effector complex. The polypeptide is DNA mismatch repair protein MutL (Christiangramia forsetii (strain DSM 17595 / CGMCC 1.15422 / KT0803) (Gramella forsetii)).